Reading from the N-terminus, the 184-residue chain is Fruit protein pKIWI501 (184 aa).

Positions 1–184 are disordered; it reads MATVEVTPAV…TEVPVDKTEE (184 aa). Low complexity-rich tracts occupy residues 25–36 and 53–65; these read PQEPQPEAAVAA and PEAV…PAAT. A compositionally biased stretch (acidic residues) spans 72–92; that stretch reads EVAEAEEEVVEEPQEVPEEPV. Positions 96 to 119 are enriched in basic and acidic residues; sequence AAKEVEATEGKAEPTGEMKDKTPE. The segment covering 120–156 has biased composition (low complexity); the sequence is ATDAPEAPAAAEEPTDAPEAPAVAEEPTNAPEAPAVG. Positions 159-168 are enriched in basic and acidic residues; the sequence is PEAKEGKPDE.

It to H.brasiliensis latex allergen Hev b 5.

This chain is Fruit protein pKIWI501, found in Actinidia deliciosa (Kiwi).